We begin with the raw amino-acid sequence, 252 residues long: D-aminoacyl-tRNA deacylase (252 aa).

It belongs to the DtdA deacylase family. In terms of assembly, monomer. It depends on Zn(2+) as a cofactor.

The catalysed reaction is a D-aminoacyl-tRNA + H2O = a tRNA + a D-alpha-amino acid + H(+). It catalyses the reaction glycyl-tRNA(Ala) + H2O = tRNA(Ala) + glycine + H(+). Its function is as follows. D-aminoacyl-tRNA deacylase with broad substrate specificity. By recycling D-aminoacyl-tRNA to D-amino acids and free tRNA molecules, this enzyme counteracts the toxicity associated with the formation of D-aminoacyl-tRNA entities in vivo. This chain is D-aminoacyl-tRNA deacylase, found in Pyrobaculum islandicum (strain DSM 4184 / JCM 9189 / GEO3).